A 1343-amino-acid chain; its full sequence is MIYSYTEKKRIRENFGKQPKILDIPYLLSIQIDSFKKFIEPKKNNYQGLESAFQSIFPIRSYNGCAELQYVSYTLGKKLFDMYESKTRGTTYSVPLRVKLQLIIYEKDSKNTNVKHIKEQEVYMGELPLMTHNGTFIINGTERVVVSQLHRSPGVFFDSDKGKTHSSGKILYNARIIPYRGSWLDVEFDPKDHLFIRIDRRRKIPATVLLHALNFSTEKILKIFFKHDIFYIKNKNIYMYLIPKRLKGEIIPFEIIKNKKRYIKKGERITTEHIKKLKKKKIKTIQIPEEYLYGKTISKNYYHPKTKEILIKSNTTLTQDEFNKIKNFNNKKFYVLFTNNIDNGAYISETLKIDTTKDRLTALIEIYKIMRPGEPPTKEAAENLFNNLFFSQERYDLSPVGRMKFNKSLKRKEKKGSGILNKEDIIDVIKKLINIKNGKGEIDDIDHLSNRRVRSVGEMVENQFRIGLVRVERAVRERLSLSDLDTLMPQDIINAKPISSAIKEFFGSSQLSQFMDQNNPLAEITHKRRISALGIGGLTRERAGFEVRDVHPTHYGRVCPVETPEGPNIGLINSLSIYARTNQYGFLETPYRKVKNGTVTTKIKYLSAIEEGNYIIAQANTKINKFGKFYKKFVTCRYNGEFGLFKNKKVNYMDISTQQIVSVGASLIPFLEHDDANRALMGANMQRQAVPTIKSEKPLVGTGMERSVAIDSGVTIIAKRSGKIEYVDASRIVVRIKDEKIRTYESGIDIYNLTKYSRSNQNTCINQIPCINLNDSIKKGDVLADGPSTDLGELALGQNMRVAFMPWNGYNFEDSILISEKVEREDKFTTIHIQELSCICRDTKLGIEEITSDIPNIGESALSKLDTSGIIYIGADVSSGDVLVGKVTPKGETQLTPEEKLLRAIFGEKASDVKDSSLRVPNGTNGTVIDVQIFTRDGVKKDKRTIEIEEMLLKKAKKDLTEELKIFELNIINRINKILLTLKTKINCIVANSLNEYFKKKIKYPKKIKKKIHTLKIQYKQLQKKFKKKIKEKTKKIIQGDELAPGILKIVKIFLAVKRKIQPGDKMAGRHGNKGVVSKINPVEDMPYDNNGEPIDIVLNPLGVPSRMNLGQILETHLGLAAKGIGNIINRMLKTNKKIYKIRKFLQKVYNLGENINQKINLDNFSDIEILQLAKNLRIGLPIATPVFDGVNEKEIKKLLKMSNFSTSGQITLFDGRTGEKFERNVTVGYMYMLKLNHLVDDKMHARSTGSYSLITQQPLGGKAQFGGQRFGEMEVWALEAYGASHTLQEMLTVKSDDVTGRTKMYKNIVSGKHNMEPGMPESFNVLVKEIRSLGINIELNNN.

The protein belongs to the RNA polymerase beta chain family. The RNAP catalytic core consists of 2 alpha, 1 beta, 1 beta' and 1 omega subunit. When a sigma factor is associated with the core the holoenzyme is formed, which can initiate transcription.

It catalyses the reaction RNA(n) + a ribonucleoside 5'-triphosphate = RNA(n+1) + diphosphate. In terms of biological role, DNA-dependent RNA polymerase catalyzes the transcription of DNA into RNA using the four ribonucleoside triphosphates as substrates. This chain is DNA-directed RNA polymerase subunit beta, found in Buchnera aphidicola subsp. Cinara cedri (strain Cc).